Reading from the N-terminus, the 123-residue chain is Small ribosomal subunit protein uS12 (123 aa).

3-methylthioaspartic acid is present on aspartate 89. The segment at threonine 104 to lysine 123 is disordered. Positions arginine 110–lysine 123 are enriched in basic residues.

The protein belongs to the universal ribosomal protein uS12 family. Part of the 30S ribosomal subunit. Contacts proteins S8 and S17. May interact with IF1 in the 30S initiation complex.

With S4 and S5 plays an important role in translational accuracy. Its function is as follows. Interacts with and stabilizes bases of the 16S rRNA that are involved in tRNA selection in the A site and with the mRNA backbone. Located at the interface of the 30S and 50S subunits, it traverses the body of the 30S subunit contacting proteins on the other side and probably holding the rRNA structure together. The combined cluster of proteins S8, S12 and S17 appears to hold together the shoulder and platform of the 30S subunit. This chain is Small ribosomal subunit protein uS12, found in Rhodospirillum rubrum (strain ATCC 11170 / ATH 1.1.1 / DSM 467 / LMG 4362 / NCIMB 8255 / S1).